A 486-amino-acid chain; its full sequence is Cardiolipin synthase A (486 aa).

A run of 2 helical transmembrane segments spans residues 3-23 (TFYTVVSWLVILGYWVLIAGV) and 38-58 (MAWLLIIYILPMVGIIAYLSV). 2 consecutive PLD phosphodiesterase domains span residues 219 to 246 (MDLRQHRKMVMIDNYIAYTGSMNMVDPR) and 399 to 426 (EGGLLHTKSVLVDGELSLVGTVNLDMRS). Residues His224, Lys226, Asp231, His404, Lys406, and Asp411 contribute to the active site.

It belongs to the phospholipase D family. Cardiolipin synthase subfamily. ClsA sub-subfamily.

The protein localises to the cell inner membrane. The catalysed reaction is 2 a 1,2-diacyl-sn-glycero-3-phospho-(1'-sn-glycerol) = a cardiolipin + glycerol. Its function is as follows. Catalyzes the reversible phosphatidyl group transfer from one phosphatidylglycerol molecule to another to form cardiolipin (CL) (diphosphatidylglycerol) and glycerol. This Salmonella gallinarum (strain 287/91 / NCTC 13346) protein is Cardiolipin synthase A.